Reading from the N-terminus, the 186-residue chain is UPF0669 protein C6orf120 homolog (186 aa).

Positions Met-1–Gly-19 are cleaved as a signal peptide. A glycan (N-linked (GlcNAc...) asparagine) is linked at Asn-47. Residues Lys-141–Glu-165 are disordered. Polar residues predominate over residues Asn-142–Pro-159.

The protein belongs to the UPF0669 family.

The protein localises to the secreted. This is UPF0669 protein C6orf120 homolog from Danio rerio (Zebrafish).